A 216-amino-acid polypeptide reads, in one-letter code: Protein Syd (216 aa).

This sequence belongs to the Syd family.

The protein localises to the cell inner membrane. Interacts with the SecY protein in vivo. May bind preferentially to an uncomplexed state of SecY, thus functioning either as a chelating agent for excess SecY in the cell or as a regulatory factor that negatively controls the translocase function. The polypeptide is Protein Syd (Shewanella sp. (strain MR-7)).